A 607-amino-acid polypeptide reads, in one-letter code: Cytosolic Fe-S cluster assembly factor NAR1 (607 aa).

Residues cysteine 20, cysteine 82, cysteine 85, cysteine 88, cysteine 204, and cysteine 259 each contribute to the [4Fe-4S] cluster site. Positions 430–476 (KPNTGKSTNTTTTTTKSKVNPLAARRRARIANNRGKPETKSTSEVNS) are disordered. Residues 432-447 (NTGKSTNTTTTTTKSK) show a composition bias toward low complexity. Residues cysteine 496 and cysteine 500 each coordinate [4Fe-4S] cluster.

It belongs to the NARF family.

Functionally, component of the cytosolic Fe/S protein assembly machinery. Required for maturation of extramitochondrial Fe/S proteins. May play a role in the transfer of pre-assembled Fe/S clusters to target apoproteins. The sequence is that of Cytosolic Fe-S cluster assembly factor NAR1 (NAR1) from Candida albicans (strain SC5314 / ATCC MYA-2876) (Yeast).